The primary structure comprises 280 residues: Adenosylcobinamide-GDP ribazoletransferase (280 aa).

7 consecutive transmembrane segments (helical) span residues 4–24 (YLLA…GITM), 34–54 (IFFY…VAYA), 58–78 (VFPG…ITGF), 108–128 (TLGT…YGSI), 136–156 (IAAF…IAEV), 197–217 (LIGF…IGLI), and 254–274 (ITAL…YLGG).

The protein belongs to the CobS family. Requires Mg(2+) as cofactor.

Its subcellular location is the cell membrane. The enzyme catalyses alpha-ribazole + adenosylcob(III)inamide-GDP = adenosylcob(III)alamin + GMP + H(+). The catalysed reaction is alpha-ribazole 5'-phosphate + adenosylcob(III)inamide-GDP = adenosylcob(III)alamin 5'-phosphate + GMP + H(+). It functions in the pathway cofactor biosynthesis; adenosylcobalamin biosynthesis; adenosylcobalamin from cob(II)yrinate a,c-diamide: step 7/7. In terms of biological role, joins adenosylcobinamide-GDP and alpha-ribazole to generate adenosylcobalamin (Ado-cobalamin). Also synthesizes adenosylcobalamin 5'-phosphate from adenosylcobinamide-GDP and alpha-ribazole 5'-phosphate. The protein is Adenosylcobinamide-GDP ribazoletransferase of Methanosarcina mazei (strain ATCC BAA-159 / DSM 3647 / Goe1 / Go1 / JCM 11833 / OCM 88) (Methanosarcina frisia).